We begin with the raw amino-acid sequence, 263 residues long: Acetylglutamate kinase (263 aa).

Substrate is bound by residues Gly-48–Gly-49, Arg-70, and Asn-162.

This sequence belongs to the acetylglutamate kinase family. ArgB subfamily.

The protein localises to the cytoplasm. It catalyses the reaction N-acetyl-L-glutamate + ATP = N-acetyl-L-glutamyl 5-phosphate + ADP. Its pathway is amino-acid biosynthesis; L-arginine biosynthesis; N(2)-acetyl-L-ornithine from L-glutamate: step 2/4. Functionally, catalyzes the ATP-dependent phosphorylation of N-acetyl-L-glutamate. The polypeptide is Acetylglutamate kinase (Vibrio vulnificus (strain YJ016)).